The chain runs to 319 residues: Cobalamin biosynthesis protein CbiB (319 aa).

Helical transmembrane passes span 56 to 76 (VMWIVVVGATWGMAWGVLALA), 82 to 102 (WLGWSVEVWMIFTVLAGRSLA), 153 to 173 (VDGIIAPLFFLFLGGAPLAMA), 204 to 224 (VANYLPARLSWLLLGIAAGLC), and 296 to 316 (LMWGASTLALALFIAARCWLS).

Belongs to the CobD/CbiB family.

It localises to the cell membrane. The protein operates within cofactor biosynthesis; adenosylcobalamin biosynthesis. In terms of biological role, converts cobyric acid to cobinamide by the addition of aminopropanol on the F carboxylic group. However, the true cosubstrate could be (R)-1-amino-2-propanol O-2-phosphate, leading to cobinamide phosphate. The protein is Cobalamin biosynthesis protein CbiB of Salmonella arizonae (strain ATCC BAA-731 / CDC346-86 / RSK2980).